Consider the following 138-residue polypeptide: Large ribosomal subunit protein uL16 (138 aa).

The protein belongs to the universal ribosomal protein uL16 family. As to quaternary structure, part of the 50S ribosomal subunit.

Its function is as follows. Binds 23S rRNA and is also seen to make contacts with the A and possibly P site tRNAs. The polypeptide is Large ribosomal subunit protein uL16 (Gluconobacter oxydans (strain 621H) (Gluconobacter suboxydans)).